A 331-amino-acid chain; its full sequence is Tetraacyldisaccharide 4'-kinase (331 aa).

Residue 60-67 (TIGGTGKT) participates in ATP binding.

This sequence belongs to the LpxK family.

It catalyses the reaction a lipid A disaccharide + ATP = a lipid IVA + ADP + H(+). It functions in the pathway glycolipid biosynthesis; lipid IV(A) biosynthesis; lipid IV(A) from (3R)-3-hydroxytetradecanoyl-[acyl-carrier-protein] and UDP-N-acetyl-alpha-D-glucosamine: step 6/6. Functionally, transfers the gamma-phosphate of ATP to the 4'-position of a tetraacyldisaccharide 1-phosphate intermediate (termed DS-1-P) to form tetraacyldisaccharide 1,4'-bis-phosphate (lipid IVA). This Pseudomonas syringae pv. tomato (strain ATCC BAA-871 / DC3000) protein is Tetraacyldisaccharide 4'-kinase.